The primary structure comprises 71 residues: MPSVKVRENEPFEFALRRFKRICEKAGILAETRKREFYEKPTQERKRKAAAAVKRNIRRTSRDVTKRKRLY.

The interval 40–71 (KPTQERKRKAAAAVKRNIRRTSRDVTKRKRLY) is disordered. Residues 45–71 (RKRKAAAAVKRNIRRTSRDVTKRKRLY) are compositionally biased toward basic residues.

It belongs to the bacterial ribosomal protein bS21 family.

In Xylella fastidiosa (strain M23), this protein is Small ribosomal subunit protein bS21.